Here is a 388-residue protein sequence, read N- to C-terminus: Chalcone synthase D (388 aa).

Cysteine 164 is an active-site residue.

It belongs to the thiolase-like superfamily. Chalcone/stilbene synthases family.

The enzyme catalyses (E)-4-coumaroyl-CoA + 3 malonyl-CoA + 3 H(+) = 2',4,4',6'-tetrahydroxychalcone + 3 CO2 + 4 CoA. It functions in the pathway secondary metabolite biosynthesis; flavonoid biosynthesis. The primary product of this enzyme is 4,2',4',6'-tetrahydroxychalcone (also termed naringenin-chalcone or chalcone) which can under specific conditions spontaneously isomerize into naringenin. In Ipomoea nil (Japanese morning glory), this protein is Chalcone synthase D (CHSD).